We begin with the raw amino-acid sequence, 112 residues long: Putative pterin-4-alpha-carbinolamine dehydratase (112 aa).

It belongs to the pterin-4-alpha-carbinolamine dehydratase family.

It carries out the reaction (4aS,6R)-4a-hydroxy-L-erythro-5,6,7,8-tetrahydrobiopterin = (6R)-L-erythro-6,7-dihydrobiopterin + H2O. This is Putative pterin-4-alpha-carbinolamine dehydratase from Vibrio campbellii (strain ATCC BAA-1116).